Here is a 521-residue protein sequence, read N- to C-terminus: Protein nucleotidyltransferase YdiU (521 aa).

Residues Gly109, Gly111, Arg112, Lys131, Asp143, Gly144, Arg194, and Arg201 each coordinate ATP. Asp270 serves as the catalytic Proton acceptor. Asn271 and Asp280 together coordinate Mg(2+). Asp280 lines the ATP pocket.

Belongs to the SELO family. Mg(2+) is required as a cofactor. It depends on Mn(2+) as a cofactor.

The catalysed reaction is L-seryl-[protein] + ATP = 3-O-(5'-adenylyl)-L-seryl-[protein] + diphosphate. It catalyses the reaction L-threonyl-[protein] + ATP = 3-O-(5'-adenylyl)-L-threonyl-[protein] + diphosphate. It carries out the reaction L-tyrosyl-[protein] + ATP = O-(5'-adenylyl)-L-tyrosyl-[protein] + diphosphate. The enzyme catalyses L-histidyl-[protein] + UTP = N(tele)-(5'-uridylyl)-L-histidyl-[protein] + diphosphate. The catalysed reaction is L-seryl-[protein] + UTP = O-(5'-uridylyl)-L-seryl-[protein] + diphosphate. It catalyses the reaction L-tyrosyl-[protein] + UTP = O-(5'-uridylyl)-L-tyrosyl-[protein] + diphosphate. In terms of biological role, nucleotidyltransferase involved in the post-translational modification of proteins. It can catalyze the addition of adenosine monophosphate (AMP) or uridine monophosphate (UMP) to a protein, resulting in modifications known as AMPylation and UMPylation. This Burkholderia pseudomallei (strain 1106a) protein is Protein nucleotidyltransferase YdiU.